Here is a 341-residue protein sequence, read N- to C-terminus: Glucokinase (341 aa).

18–23 (GDIGGT) lines the ATP pocket.

It belongs to the bacterial glucokinase family.

It localises to the cytoplasm. The enzyme catalyses D-glucose + ATP = D-glucose 6-phosphate + ADP + H(+). In Rhizobium etli (strain CIAT 652), this protein is Glucokinase.